Here is a 703-residue protein sequence, read N- to C-terminus: MEETFVPFEGIKNDLKGRLMCYKQDWTGGIKAGFRILAPTTYIFFASAIPVISFGEQLERSTDGVLTAVQTLASTAICGIIHSIIGGQPLLILGVAEPTVIMYTFMFNFAKGRPELGRNLFLAWSGWVCVWTSLILFVLAICGACSFINRFTRVAGELFGLLIAMLFMQQAIKGLVDEFRAPAREDLKLVEFLPSWRFANGMFALVLSFGLLITALRSRKARSWRYGTGWLRSLVADYGVPLMVLVWTGVSYIPTGDVPKGIPRRLFSPNPWSPGAYENWTVVKEMLQVPIVYIIGAFIPATMIAVLYYFDHSVASQLAQQKEFNLRKPSSYHYDLLLLGFLTLMCGLLGIPPSNGVIPQSPMHTKSLATLKYQLLRNRLVATARKSIKQNASLGQLYGNMQDVYNQMQTPLVYQQPQGLKELRESTIQATTFTGNLDAPVDETLFDIEKEIDDLLPIEVKEQRVSNLLQAVMVGGCVAAMPLLKMIPTSVLWGYFAFMAIESLPGNQFWERILLLFTAPSRRFKVLEDNHATFVETVPFKTIAMFTIFQTTYLLTCFGLTWIPIAGVMFPLLIMFLIPVRQYILPRFFKSAHLQDLDAAEYEEAPALPFHLAVPEAEMGSTASYPCDSEILDEFITRSRGEFRHTCSPKVTSSTSTPVYNRNLSQVFSPRVIDLRGEMSPRLSGKGQNSPKPSPLNPSSSSK.

Topologically, residues 1 to 35 (MEETFVPFEGIKNDLKGRLMCYKQDWTGGIKAGFR) are cytoplasmic. A helical membrane pass occupies residues 36 to 56 (ILAPTTYIFFASAIPVISFGE). Topologically, residues 57–75 (QLERSTDGVLTAVQTLAST) are extracellular. The helical transmembrane segment at 76–96 (AICGIIHSIIGGQPLLILGVA) threads the bilayer. Over 97-120 (EPTVIMYTFMFNFAKGRPELGRNL) the chain is Cytoplasmic. A helical transmembrane segment spans residues 121–141 (FLAWSGWVCVWTSLILFVLAI). Residues 142–155 (CGACSFINRFTRVA) lie on the Extracellular side of the membrane. A helical membrane pass occupies residues 156 to 176 (GELFGLLIAMLFMQQAIKGLV). At 177-195 (DEFRAPAREDLKLVEFLPS) the chain is on the cytoplasmic side. A helical membrane pass occupies residues 196–216 (WRFANGMFALVLSFGLLITAL). Over 217–233 (RSRKARSWRYGTGWLRS) the chain is Extracellular. The helical transmembrane segment at 234 to 254 (LVADYGVPLMVLVWTGVSYIP) threads the bilayer. The Cytoplasmic segment spans residues 255–289 (TGDVPKGIPRRLFSPNPWSPGAYENWTVVKEMLQV). A helical transmembrane segment spans residues 290–310 (PIVYIIGAFIPATMIAVLYYF). Topologically, residues 311–337 (DHSVASQLAQQKEFNLRKPSSYHYDLL) are extracellular. The chain crosses the membrane as a helical span at residues 338-358 (LLGFLTLMCGLLGIPPSNGVI). The Cytoplasmic portion of the chain corresponds to 359-480 (PQSPMHTKSL…AVMVGGCVAA (122 aa)). The helical transmembrane segment at 481–501 (MPLLKMIPTSVLWGYFAFMAI) threads the bilayer. Residues 502 to 557 (ESLPGNQFWERILLLFTAPSRRFKVLEDNHATFVETVPFKTIAMFTIFQTTYLLTC) lie on the Extracellular side of the membrane. The helical transmembrane segment at 558 to 578 (FGLTWIPIAGVMFPLLIMFLI) threads the bilayer. The Cytoplasmic portion of the chain corresponds to 579–703 (PVRQYILPRF…SPLNPSSSSK (125 aa)). The tract at residues 678–703 (EMSPRLSGKGQNSPKPSPLNPSSSSK) is disordered.

The protein belongs to the anion exchanger (TC 2.A.31.3) family.

Its subcellular location is the membrane. Functionally, probable boron transporter. Boron is essential for maintaining the integrity of plants cell walls. The chain is Probable boron transporter 2 (BOR2) from Arabidopsis thaliana (Mouse-ear cress).